A 427-amino-acid polypeptide reads, in one-letter code: CCA-adding enzyme (427 aa).

ATP-binding residues include S50 and K53. CTP contacts are provided by S50 and K53. Mg(2+)-binding residues include D61, D63, and D112. H135, K155, and Y164 together coordinate ATP. Positions 135, 155, and 164 each coordinate CTP.

The protein belongs to the tRNA nucleotidyltransferase/poly(A) polymerase family. Archaeal CCA-adding enzyme subfamily. In terms of assembly, homodimer. It depends on Mg(2+) as a cofactor.

It catalyses the reaction a tRNA precursor + 2 CTP + ATP = a tRNA with a 3' CCA end + 3 diphosphate. The catalysed reaction is a tRNA with a 3' CCA end + 2 CTP + ATP = a tRNA with a 3' CCACCA end + 3 diphosphate. In terms of biological role, catalyzes the addition and repair of the essential 3'-terminal CCA sequence in tRNAs without using a nucleic acid template. Adds these three nucleotides in the order of C, C, and A to the tRNA nucleotide-73, using CTP and ATP as substrates and producing inorganic pyrophosphate. tRNA 3'-terminal CCA addition is required both for tRNA processing and repair. Also involved in tRNA surveillance by mediating tandem CCA addition to generate a CCACCA at the 3' terminus of unstable tRNAs. While stable tRNAs receive only 3'-terminal CCA, unstable tRNAs are marked with CCACCA and rapidly degraded. This chain is CCA-adding enzyme, found in Picrophilus torridus (strain ATCC 700027 / DSM 9790 / JCM 10055 / NBRC 100828 / KAW 2/3).